A 216-amino-acid chain; its full sequence is Ras-related protein Rab-5C (216 aa).

The GTP site is built by S30, A31, G33, K34, S35, S36, H47, E48, T53, and G79. Mg(2+) is bound at residue S35. 2 short sequence motifs (switch) span residues 45 to 57 and 78 to 94; these read QFHEYQESTIGAA and AGQERYHSLAPMYYRGA. Position 53 (T53) interacts with Mg(2+). S85 is modified (phosphoserine). Residues N134, K135, D137, A165, and K166 each coordinate GTP. The tract at residues 185–216 is disordered; it reads NEPQNAAGAPGRTRGVDLQESNPASRSQCCSN. Over residues 203–216 the composition is skewed to polar residues; it reads QESNPASRSQCCSN. 2 S-geranylgeranyl cysteine lipidation sites follow: C213 and C214.

Belongs to the small GTPase superfamily. Rab family. Interacts with EEA1 and INCA1. Interacts with GDI1, GDI2, CHML and CHM; phosphorylation at Ser-85 disrupts this interaction. Mg(2+) serves as cofactor. Phosphorylation of Ser-85 in the switch II region by LRRK2 prevents the association of RAB regulatory proteins, including CHM, CHML and RAB GDP dissociation inhibitors GDI1 and GDI2.

The protein localises to the cell membrane. It is found in the early endosome membrane. It localises to the melanosome. The catalysed reaction is GTP + H2O = GDP + phosphate + H(+). Regulated by guanine nucleotide exchange factors (GEFs) which promote the exchange of bound GDP for free GTP. Regulated by GTPase activating proteins (GAPs) which increase the GTP hydrolysis activity. Inhibited by GDP dissociation inhibitors (GDIs). The small GTPases Rab are key regulators of intracellular membrane trafficking, from the formation of transport vesicles to their fusion with membranes. Rabs cycle between an inactive GDP-bound form and an active GTP-bound form that is able to recruit to membranes different sets of downstream effectors directly responsible for vesicle formation, movement, tethering and fusion. This Mus musculus (Mouse) protein is Ras-related protein Rab-5C.